The following is a 248-amino-acid chain: Adenosylcobinamide-GDP ribazoletransferase (248 aa).

The next 6 membrane-spanning stretches (helical) occupy residues 36-56 (FFLP…YLGL), 59-79 (FLPA…ITGG), 114-134 (GTIA…SLVL), 137-157 (YSIA…FLCL), 170-190 (IFIG…VLVL), and 199-219 (ATII…LLCL).

It belongs to the CobS family. It depends on Mg(2+) as a cofactor.

The protein resides in the cell membrane. The enzyme catalyses alpha-ribazole + adenosylcob(III)inamide-GDP = adenosylcob(III)alamin + GMP + H(+). It carries out the reaction alpha-ribazole 5'-phosphate + adenosylcob(III)inamide-GDP = adenosylcob(III)alamin 5'-phosphate + GMP + H(+). It participates in cofactor biosynthesis; adenosylcobalamin biosynthesis; adenosylcobalamin from cob(II)yrinate a,c-diamide: step 7/7. Its function is as follows. Joins adenosylcobinamide-GDP and alpha-ribazole to generate adenosylcobalamin (Ado-cobalamin). Also synthesizes adenosylcobalamin 5'-phosphate from adenosylcobinamide-GDP and alpha-ribazole 5'-phosphate. The protein is Adenosylcobinamide-GDP ribazoletransferase of Clostridium botulinum (strain Langeland / NCTC 10281 / Type F).